The primary structure comprises 110 residues: Large ribosomal subunit protein uL22 (110 aa).

This sequence belongs to the universal ribosomal protein uL22 family. Part of the 50S ribosomal subunit.

Its function is as follows. This protein binds specifically to 23S rRNA; its binding is stimulated by other ribosomal proteins, e.g. L4, L17, and L20. It is important during the early stages of 50S assembly. It makes multiple contacts with different domains of the 23S rRNA in the assembled 50S subunit and ribosome. Functionally, the globular domain of the protein is located near the polypeptide exit tunnel on the outside of the subunit, while an extended beta-hairpin is found that lines the wall of the exit tunnel in the center of the 70S ribosome. This chain is Large ribosomal subunit protein uL22, found in Hydrogenovibrio crunogenus (strain DSM 25203 / XCL-2) (Thiomicrospira crunogena).